The primary structure comprises 171 residues: Neuronal vesicle trafficking-associated protein 2 (171 aa).

The span at 1–10 shows a compositional bias: polar residues; that stretch reads MVKLNSNPSE. Positions 1 to 21 are disordered; that stretch reads MVKLNSNPSEKGTKPPSVEDG. Over 1-71 the chain is Cytoplasmic; sequence MVKLNSNPSE…FRVPKIAEFT (71 aa). Residues 72–92 form a helical; Signal-anchor for type II membrane protein membrane-spanning segment; sequence VTILVSLALAFLACIVFLVVY. The Lumenal portion of the chain corresponds to 93-171; it reads KAFTYDHSCP…EPKPPKTQGH (79 aa).

Belongs to the NSG family.

The protein localises to the membrane. The protein resides in the golgi apparatus. It localises to the trans-Golgi network membrane. It is found in the cell projection. Its subcellular location is the dendrite. The protein localises to the endosome membrane. The protein resides in the early endosome membrane. It localises to the late endosome membrane. It is found in the lysosome lumen. Its subcellular location is the cytoplasmic vesicle membrane. The protein localises to the golgi stack membrane. The protein resides in the endosome. It localises to the multivesicular body membrane. The polypeptide is Neuronal vesicle trafficking-associated protein 2 (Homo sapiens (Human)).